A 371-amino-acid chain; its full sequence is Protein maelstrom 1 (371 aa).

Positions 2-68 form a DNA-binding region, HMG box; the sequence is AQNKPNAFMA…VLERESKTER (67 aa).

Belongs to the maelstrom family.

Its subcellular location is the cytoplasm. It is found in the nucleus. Functionally, involved both in the piRNA and miRNA metabolic processes. As a component of the meiotic nuage, plays a central role during oogenesis by repressing transposable elements and preventing their mobilization, which is essential for the germline integrity. Repression of transposable elements is mediated via the piRNA metabolic process, which mediates the repression of transposable elements during meiosis by forming complexes composed of piRNAs and Piwi proteins and governs the repression of transposons. As a nuclear component, it is required for proper differentiation in the germline stem cell (GSC) lineage by repressing microRNA-7 (miR-7), thereby acting as an indirect regulator of bag-of-marbles (Bam). Acts by binding to the promoter of miR-7 gene and repressing its expression; miR-7 repression alleviates the Bam repression by miR-7, thereby allowing differentiation in the germline stem cell (GSC) lineage. In Drosophila pseudoobscura pseudoobscura (Fruit fly), this protein is Protein maelstrom 1 (mael1).